Reading from the N-terminus, the 127-residue chain is DNA-directed RNA polymerase subunit omega (127 aa).

The protein belongs to the RNA polymerase subunit omega family. The RNAP catalytic core consists of 2 alpha, 1 beta, 1 beta' and 1 omega subunit. When a sigma factor is associated with the core the holoenzyme is formed, which can initiate transcription.

The catalysed reaction is RNA(n) + a ribonucleoside 5'-triphosphate = RNA(n+1) + diphosphate. Promotes RNA polymerase assembly. Latches the N- and C-terminal regions of the beta' subunit thereby facilitating its interaction with the beta and alpha subunits. The polypeptide is DNA-directed RNA polymerase subunit omega (Rickettsia canadensis (strain McKiel)).